Consider the following 180-residue polypeptide: Large ribosomal subunit protein uL5 (180 aa).

This sequence belongs to the universal ribosomal protein uL5 family. As to quaternary structure, part of the 50S ribosomal subunit; part of the 5S rRNA/L5/L18/L25 subcomplex. Contacts the 5S rRNA and the P site tRNA. Forms a bridge to the 30S subunit in the 70S ribosome.

Functionally, this is one of the proteins that bind and probably mediate the attachment of the 5S RNA into the large ribosomal subunit, where it forms part of the central protuberance. In the 70S ribosome it contacts protein S13 of the 30S subunit (bridge B1b), connecting the 2 subunits; this bridge is implicated in subunit movement. Contacts the P site tRNA; the 5S rRNA and some of its associated proteins might help stabilize positioning of ribosome-bound tRNAs. The sequence is that of Large ribosomal subunit protein uL5 from Chlamydia felis (strain Fe/C-56) (Chlamydophila felis).